A 231-amino-acid chain; its full sequence is MIKDERWEGVYSFEDSPYLMETLTDLRKISTENISFRKGLVRLGRYMGYELTKTMEFEKMPIQTPLEKTEGIFSKDRKNVVIITILRAAFPLMEGLIKNFESAKVGIVSASRGHAPDFKIEMNYIKVPQLNSEDTVIISDPMIATGSTLIRVLNEFKDSKPKRMLIVGVLAAPEGINAVKAEFPDVEIFVTKIDEKLNKDGYIVPGLGDAGDRAFGEPYKVSMLPQMHNLE.

38–42 provides a ligand contact to GTP; sequence KGLVR. Residues Arg87, Arg112, and 140 to 148 contribute to the 5-phospho-alpha-D-ribose 1-diphosphate site; that span reads DPMIATGST. Uracil-binding positions include Ile203 and 208–210; that span reads GDA. Asp209 is a 5-phospho-alpha-D-ribose 1-diphosphate binding site.

This sequence belongs to the UPRTase family. It depends on Mg(2+) as a cofactor.

The catalysed reaction is UMP + diphosphate = 5-phospho-alpha-D-ribose 1-diphosphate + uracil. It participates in pyrimidine metabolism; UMP biosynthesis via salvage pathway; UMP from uracil: step 1/1. Its activity is regulated as follows. Allosterically activated by GTP. In terms of biological role, catalyzes the conversion of uracil and 5-phospho-alpha-D-ribose 1-diphosphate (PRPP) to UMP and diphosphate. This chain is Uracil phosphoribosyltransferase, found in Methanococcus maripaludis (strain C7 / ATCC BAA-1331).